The primary structure comprises 369 residues: MSTIAGESSSSSKMPENSQPTTTEKGSEYLEQLANEAEELRKKLDQERHKLNDIPIQQAAERLDVMGALGVKQRRILKGHVGKVLCMDWSLDKRHIVSSSQDGKVIVWDGFTTNKEHALTMPTTWVMACAFSPSSQMIACGGLDNKCSVVPLSFEDDIIQKKRQVATHTSYMSCCTFLRSDNLILTGSGDSTCAIWDVESGQLIQNFHGHTGDVFAIDVPKCDTGNTFISAGADKHSLVWDIRSGQCVQSFEGHEADINTVRFHPNGDAFATGSDDATCRLFDLRADRQVCVYEKESILFPVNGVDFSLSGRILFAGYGDYRVGVWDSLKCARHSVLYGHENRISCLRTSPDGTAVCSASWDCTIRIWA.

Over residues M1–E24 the composition is skewed to polar residues. The segment at M1–E28 is disordered. WD repeat units follow at residues G79–D109, M121–P151, T167–D197, G209–D241, G253–D283, S297–D327, and G339–A369.

The protein belongs to the WD repeat G protein beta family. In terms of assembly, g proteins are composed of 3 units, alpha, beta and gamma. Interacts with G protein gamma subunits gpc-1 and gpc-2 and with egl-10 and eat-16.

Its function is as follows. Guanine nucleotide-binding proteins (G proteins) are involved as a modulator or transducer in various transmembrane signaling systems. The beta and gamma chains are required for the GTPase activity, for replacement of GDP by GTP, and for G protein-effector interaction. Plays a role in regulating dopamine-mediated locomotion behavior. The chain is Guanine nucleotide-binding protein subunit beta-2 from Caenorhabditis elegans.